Consider the following 321-residue polypeptide: Translation initiation factor eIF2B subunit alpha (321 aa).

The protein belongs to the eIF-2B alpha/beta/delta subunits family. In terms of assembly, component of the translation initiation factor 2B (eIF2B) complex which is a heterodecamer of two sets of five different subunits: alpha, beta, gamma, delta and epsilon. Subunits alpha, beta and delta comprise a regulatory subcomplex and subunits epsilon and gamma comprise a catalytic subcomplex. Within the complex, the hexameric regulatory complex resides at the center, with the two heterodimeric catalytic subcomplexes bound on opposite sides.

Its subcellular location is the cytoplasm. It localises to the cytosol. Acts as a component of the translation initiation factor 2B (eIF2B) complex, which catalyzes the exchange of GDP for GTP on eukaryotic initiation factor 2 (eIF2) gamma subunit. Its guanine nucleotide exchange factor activity is repressed when bound to eIF2 complex phosphorylated on the alpha subunit, thereby limiting the amount of methionyl-initiator methionine tRNA available to the ribosome and consequently global translation is repressed. The polypeptide is Translation initiation factor eIF2B subunit alpha (eif2b1) (Dictyostelium discoideum (Social amoeba)).